A 201-amino-acid polypeptide reads, in one-letter code: Recombination protein RecR (201 aa).

Residues 60–75 form a C4-type zinc finger; it reads CQVCGNVDVRDPCTVC. The Toprim domain maps to 83 to 178; it reads SVLVVVAEVA…KVTRLAHGVP (96 aa).

Belongs to the RecR family.

Its function is as follows. May play a role in DNA repair. It seems to be involved in an RecBC-independent recombinational process of DNA repair. It may act with RecF and RecO. This Azorhizobium caulinodans (strain ATCC 43989 / DSM 5975 / JCM 20966 / LMG 6465 / NBRC 14845 / NCIMB 13405 / ORS 571) protein is Recombination protein RecR.